We begin with the raw amino-acid sequence, 155 residues long: Archaemetzincin (155 aa).

Residue His109 coordinates Zn(2+). Glu110 functions as the Proton acceptor in the catalytic mechanism. Zn(2+)-binding residues include His113, His119, Cys120, Cys125, Cys144, and Cys147.

This sequence belongs to the peptidase M54 family. As to quaternary structure, monomer. Requires Zn(2+) as cofactor.

Its function is as follows. Probable zinc metalloprotease whose natural substrate is unknown. This chain is Archaemetzincin, found in Pyrobaculum aerophilum (strain ATCC 51768 / DSM 7523 / JCM 9630 / CIP 104966 / NBRC 100827 / IM2).